Consider the following 151-residue polypeptide: D-aminoacyl-tRNA deacylase (151 aa).

Residues 137-138 (GP) carry the Gly-cisPro motif, important for rejection of L-amino acids motif.

The protein belongs to the DTD family. Homodimer.

The protein localises to the cytoplasm. The enzyme catalyses glycyl-tRNA(Ala) + H2O = tRNA(Ala) + glycine + H(+). The catalysed reaction is a D-aminoacyl-tRNA + H2O = a tRNA + a D-alpha-amino acid + H(+). An aminoacyl-tRNA editing enzyme that deacylates mischarged D-aminoacyl-tRNAs. Also deacylates mischarged glycyl-tRNA(Ala), protecting cells against glycine mischarging by AlaRS. Acts via tRNA-based rather than protein-based catalysis; rejects L-amino acids rather than detecting D-amino acids in the active site. By recycling D-aminoacyl-tRNA to D-amino acids and free tRNA molecules, this enzyme counteracts the toxicity associated with the formation of D-aminoacyl-tRNA entities in vivo and helps enforce protein L-homochirality. In Protochlamydia amoebophila (strain UWE25), this protein is D-aminoacyl-tRNA deacylase.